The sequence spans 1476 residues: ABC-type transporter FG02316 (1476 aa).

Residue Asn-2 is glycosylated (N-linked (GlcNAc...) asparagine). 10 consecutive transmembrane segments (helical) span residues 23–43 (FTLLFEESILVVPITALLLLA), 64–84 (WLYCKIILCLLLLASQIAFLV), 97–117 (SLPAAALSIVASITLLGLSYV), 156–176 (AAITALISTVVKILMLSAETI), 266–286 (ILFIIFPRLCFIGFTFCQPFL), 305–325 (QGYGLIGAWFLVFIGLAVTTG), 384–404 (VWANLIEIVIAVYLLGRQLGL), 407–427 (LIPVGAAIFSIVGSVIAVSFV), 485–505 (LLIWNMVLAYLAPIFAPVLSF), and 532–552 (LFALLQEPLASFVTSLSSFMG). Residues 274-552 (LCFIGFTFCQ…FVTSLSSFMG (279 aa)) form the ABC transmembrane type-1 1 domain. Positions 586–615 (ISGVSSSEEKHPVSPIQESMMKTEPSGDSP) are disordered. The ABC transporter 1 domain occupies 622-847 (IRNASFGYDR…SDNYVSHSDV (226 aa)). Asn-624 is a glycosylation site (N-linked (GlcNAc...) asparagine). An ATP-binding site is contributed by 654–661 (GPVGSGKS). N-linked (GlcNAc...) asparagine glycosylation is found at Asn-682, Asn-696, Asn-798, and Asn-836. The disordered stretch occupies residues 842 to 870 (VSHSDVSSPDGARSKAPSSGPASSSAPVP). A compositionally biased stretch (low complexity) spans 855 to 870 (SKAPSSGPASSSAPVP). Transmembrane regions (helical) follow at residues 906–926 (MNAIGWIPTMVFVLAICAYIF), 950–970 (LGYYLGVYAMLGALSIIFLVL), 1021–1041 (LIDMDLPLSALNTFATFVLCI), 1045–1065 (ILIAVGSYYTAIAFPFLLATL), 1137–1157 (WLTLVLDMIVTIIAVLVVVLV), and 1167–1187 (GLIGVALVNIIQFSQHLKLLM). One can recognise an ABC transmembrane type-1 2 domain in the interval 916–1195 (VFVLAICAYI…LMTFWTTLET (280 aa)). Residues 1232-1464 (ILFDQVSAGY…GPDASTFASM (233 aa)) enclose the ABC transporter 2 domain. N-linked (GlcNAc...) asparagine glycosylation is present at Asn-1250. 1265–1272 (GRTGSGKS) contacts ATP. Residue Asn-1414 is glycosylated (N-linked (GlcNAc...) asparagine).

Belongs to the ABC transporter superfamily. ABCC family. Conjugate transporter (TC 3.A.1.208) subfamily.

Its subcellular location is the cell membrane. Functionally, ABC-type transporter; part of the gene cluster that mediates the biosynthesis of the fusahexin, a cyclic hydrophobic hexapeptide with the amino acid sequence cyclo-(D-Ala-L-Leu-D-allo-Thr-L-Pro-D-Leu-L-Leu) that plays an important role in cell surface hydrophobicity. This Gibberella zeae (strain ATCC MYA-4620 / CBS 123657 / FGSC 9075 / NRRL 31084 / PH-1) (Wheat head blight fungus) protein is ABC-type transporter FG02316.